Here is a 130-residue protein sequence, read N- to C-terminus: Keratin, high-sulfur matrix protein, IIIA3A (130 aa).

In terms of tissue distribution, wool.

Functionally, the keratin products of mammalian epidermal derivatives such as wool and hair consist of microfibrils embedded in a rigid matrix of other proteins. The matrix proteins include the high-sulfur and high-tyrosine keratins, having molecular weights of 6-20 kDa, whereas the microfibrils contain the larger, low-sulfur keratins (40-56 kDa). The sequence is that of Keratin, high-sulfur matrix protein, IIIA3A from Ovis aries (Sheep).